A 114-amino-acid chain; its full sequence is Nucleoid-associated protein Clos_2855 (114 aa).

The protein belongs to the YbaB/EbfC family. Homodimer.

The protein localises to the cytoplasm. It is found in the nucleoid. In terms of biological role, binds to DNA and alters its conformation. May be involved in regulation of gene expression, nucleoid organization and DNA protection. This Alkaliphilus oremlandii (strain OhILAs) (Clostridium oremlandii (strain OhILAs)) protein is Nucleoid-associated protein Clos_2855.